The following is a 251-amino-acid chain: PF03932 family protein CutC (251 aa).

The protein belongs to the CutC family.

It localises to the cytoplasm. This Erwinia tasmaniensis (strain DSM 17950 / CFBP 7177 / CIP 109463 / NCPPB 4357 / Et1/99) protein is PF03932 family protein CutC.